The following is a 581-amino-acid chain: Tail sheath protein (581 aa).

It belongs to the myoviridae tail sheath protein family. Homomultimer.

Its subcellular location is the virion. It is found in the host cytoplasm. Functionally, polymerizes as an extended structure around the baseplate-tail tube complex. During ejection, the sheath shifts to a contracted form, thereby making the inner tail tube protrude through the host cell envelope. This chain is Tail sheath protein, found in Mycobacterium phage Bxz1 (Mycobacteriophage Bxz1).